Here is a 105-residue protein sequence, read N- to C-terminus: Large ribosomal subunit protein bL21 (105 aa).

The protein belongs to the bacterial ribosomal protein bL21 family. As to quaternary structure, part of the 50S ribosomal subunit. Contacts protein L20.

Functionally, this protein binds to 23S rRNA in the presence of protein L20. The sequence is that of Large ribosomal subunit protein bL21 from Porphyromonas gingivalis (strain ATCC BAA-308 / W83).